We begin with the raw amino-acid sequence, 367 residues long: Ferrochelatase (367 aa).

2 residues coordinate Fe cation: histidine 213 and glutamate 294.

Belongs to the ferrochelatase family.

It is found in the cytoplasm. The catalysed reaction is heme b + 2 H(+) = protoporphyrin IX + Fe(2+). Its pathway is porphyrin-containing compound metabolism; protoheme biosynthesis; protoheme from protoporphyrin-IX: step 1/1. Catalyzes the ferrous insertion into protoporphyrin IX. The sequence is that of Ferrochelatase from Dechloromonas aromatica (strain RCB).